The following is a 515-amino-acid chain: Envelope glycoprotein (515 aa).

An N-terminal signal peptide occupies residues 1–33 (MPKERRSRRRPQPIIRWVSLTLTLLALCQPIQT). Residues 34 to 435 (WRCSLSLGNQ…LGLTAWVRET (402 aa)) lie on the Extracellular side of the membrane. N129 and N203 each carry an N-linked (GlcNAc...) asparagine; by host glycan. The CXXC motif lies at 212–215 (CAIC). Disulfide bonds link C212/C215, C212/C392, and C384/C391. 5 N-linked (GlcNAc...) asparagine; by host glycosylation sites follow: N230, N251, N256, N271, and N287. A fusion peptide region spans residues 304–324 (VAALTLGLALSVGLTGINVAV). Coiled-coil stretches lie at residues 330–376 (QRLT…WLYI) and 388–420 (NEPC…DWQW). An N-linked (GlcNAc...) asparagine; by host glycan is attached at N351. The interval 365-381 (AQNRRGLDWLYIRLGFQ) is immunosuppression. A CX6CC motif is present at residues 384-392 (CPTINEPCC). An N-linked (GlcNAc...) asparagine; by host glycan is attached at N398. Residues 436–456 (IHSVLSLFLLALFLLFLAPCL) traverse the membrane as a helical segment. Residue C455 is the site of S-palmitoyl cysteine; by host attachment. The Cytoplasmic portion of the chain corresponds to 457–515 (IKCLTSRLLKLLRQAPHFPEISFPPKPDSDYQALLPSAPEIYSHLSPTKPDYINLRPCP).

The mature envelope protein (Env) consists of a trimer of SU-TM heterodimers attached by a labile interchain disulfide bond. Specific enzymatic cleavages in vivo yield mature proteins. Envelope glycoproteins are synthesized as an inactive precursor that is N-glycosylated and processed likely by host cell furin or by a furin-like protease in the Golgi to yield the mature SU and TM proteins. The cleavage site between SU and TM requires the minimal sequence [KR]-X-[KR]-R. Post-translationally, the CXXC motif is highly conserved across a broad range of retroviral envelope proteins. It is thought to participate in the formation of a labile disulfide bond possibly with the CX6CC motif present in the transmembrane protein. Isomerization of the intersubunit disulfide bond to an SU intrachain disulfide bond is thought to occur upon receptor recognition in order to allow membrane fusion. In terms of processing, the transmembrane protein is palmitoylated.

It is found in the virion membrane. The protein resides in the host cell membrane. In terms of biological role, the surface protein (SU) attaches the virus to the host cell by binding to its receptor. This interaction triggers the refolding of the transmembrane protein (TM) and is thought to activate its fusogenic potential by unmasking its fusion peptide. Fusion occurs at the host cell plasma membrane. Functionally, the transmembrane protein (TM) acts as a class I viral fusion protein. Under the current model, the protein has at least 3 conformational states: pre-fusion native state, pre-hairpin intermediate state, and post-fusion hairpin state. During viral and target cell membrane fusion, the coiled coil regions (heptad repeats) assume a trimer-of-hairpins structure, positioning the fusion peptide in close proximity to the C-terminal region of the ectodomain. The formation of this structure appears to drive apposition and subsequent fusion of viral and target cell membranes. Membranes fusion leads to delivery of the nucleocapsid into the cytoplasm. The polypeptide is Envelope glycoprotein (env) (Bovine leukemia virus (isolate Belgium LB59) (BLV)).